The primary structure comprises 260 residues: Proliferating cell nuclear antigen (260 aa).

Residues 61–80 (RCDRNLSMGMNLGSMAKILK) mediate DNA binding.

Belongs to the PCNA family. Homotrimer. Forms a complex with activator 1 heteropentamer in the presence of ATP. Interacts with E2f. Interacts with the catalytic subunits of two DNA polymerase complexes: PolD1 from the delta complex and PolE1/DNApol-epsilon255 from the epsilon complex. Expressed at high levels in adult ovary.

Its subcellular location is the nucleus. The protein resides in the chromosome. It is found in the cytoplasm. Functionally, likely to be an auxiliary protein of DNA polymerase delta complex and is probably involved in the control of DNA replication and repair by increasing the polymerase's processibility. The protein is Proliferating cell nuclear antigen of Drosophila melanogaster (Fruit fly).